The following is a 442-amino-acid chain: Proline--tRNA ligase (442 aa).

This sequence belongs to the class-II aminoacyl-tRNA synthetase family. ProS type 2 subfamily. Homodimer.

The protein resides in the cytoplasm. The catalysed reaction is tRNA(Pro) + L-proline + ATP = L-prolyl-tRNA(Pro) + AMP + diphosphate. Functionally, catalyzes the attachment of proline to tRNA(Pro) in a two-step reaction: proline is first activated by ATP to form Pro-AMP and then transferred to the acceptor end of tRNA(Pro). This is Proline--tRNA ligase from Mesorhizobium japonicum (strain LMG 29417 / CECT 9101 / MAFF 303099) (Mesorhizobium loti (strain MAFF 303099)).